Here is a 362-residue protein sequence, read N- to C-terminus: Apelin receptor A (362 aa).

At 1-37 (METEGLSPMLYEDDYYYGNETGLQPCDETDWDFSYSL) the chain is on the extracellular side. A glycan (N-linked (GlcNAc...) asparagine) is linked at N19. 2 disulfides stabilise this stretch: C26–C286 and C108–C185. The chain crosses the membrane as a helical span at residues 38-58 (LPVFYMIVFVLGLSGNGVVIF). Over 59–76 (TVWKSKPKRRSADTYIGN) the chain is Cytoplasmic. The chain crosses the membrane as a helical span at residues 77–97 (LALADLAFVVTLPLWATYTAL). The Extracellular segment spans residues 98-110 (GFHWPFGSALCKL). A helical transmembrane segment spans residues 111 to 131 (SSYLVLLNMFASVFCLTCLSF). Over 132-151 (DRYLAIVHSLSSAKLRSRSS) the chain is Cytoplasmic. The chain crosses the membrane as a helical span at residues 152–172 (IIVSLAVIWLFSGLLALPSLI). The Extracellular portion of the chain corresponds to 173 to 199 (LRDTRVEGNNTICDLDFSGVSSKENEN). A glycan (N-linked (GlcNAc...) asparagine) is linked at N181. A helical membrane pass occupies residues 200–220 (FWIGGLSILTTVPGFLLPLLL). Residues 221–248 (MTIFYCFIGGKVTMHFQNLKKEEQKKKR) are Cytoplasmic-facing. Residues 249-269 (LLKIIITLVVVFAICWLPFHI) form a helical membrane-spanning segment. The Extracellular portion of the chain corresponds to 270 to 296 (LKTIHFLDLMGFLELSCSTQNIIVSLH). A helical membrane pass occupies residues 297–317 (PYATCLAYVNSCLNPFLYAFF). Residues 318 to 362 (DLRFRSQCFFFFGFKKVLQGHLSNTSSSLSAQTQKSEIHSLATKV) are Cytoplasmic-facing.

It belongs to the G-protein coupled receptor 1 family. In terms of tissue distribution, expressed in all blood vessels including the posterior cardinal vein, intersomitic veins and the vitelline vein network. At the gastrula stage, exclusively expressed in the mesodermal layer and at the neurula stage in the lateral plate mesoderm. Larval expression is observed in the endothelium of the primary blood vessels and the forming heart.

The protein resides in the cell membrane. Its function is as follows. G protein-coupled receptor for peptide hormones apelin (apln) and apelin receptor early endogenous ligand (apela), that plays a role in the regulation of normal cardiovascular function and fluid homeostasis. When acting as apelin receptor, activates both G(i) protein pathway that inhibits adenylate cyclase activity, and the beta-arrestin pathway that promotes internalization of the receptor. Also functions as mechanoreceptor that is activated by pathological stimuli in a G-protein-independent fashion to induce beta-arrestin signaling, hence eliciting cardiac hypertrophy. However, the presence of apelin ligand blunts cardiac hypertrophic induction from APLNR/APJ on response to pathological stimuli. Plays a key role in early development such as gastrulation, blood vessels formation and heart morphogenesis by acting as a receptor for apela hormone, promoting endoderm and mesendoderm cell migration and regulating the migration of cells fated to become myocardial progenitors, respectively. Promotes angioblast migration toward the embryonic midline, i.e. the position of the future vessel formation, during vasculogenesis. May promote sinus venosus (SV)-derived endothelial cells migration into the developing heart to promote coronary blood vessel development. Required for cardiovascular development, particularly for intersomitic vein angiogenesis by acting as a receptor for apln hormone. Also plays a role in various processes in adults such as regulation of blood vessel formation, blood pressure, heart contractility, and heart failure. Acts upstream of the i/o type of G-alpha proteins in the differentiation of endothelium, erythroid cells, myeloid cells and cardiomyocytes. The sequence is that of Apelin receptor A (aplnr-a) from Xenopus laevis (African clawed frog).